The following is a 474-amino-acid chain: tRNA-2-methylthio-N(6)-dimethylallyladenosine synthase (474 aa).

Positions 3 to 120 (KKLHIKTWGC…LPEMINSVRG (118 aa)) constitute an MTTase N-terminal domain. [4Fe-4S] cluster contacts are provided by C12, C49, C83, C157, C161, and C164. Residues 143-375 (RAEGPTAFVS…QERINQQAMA (233 aa)) form the Radical SAM core domain. In terms of domain architecture, TRAM spans 378–441 (RRMLGTTQRI…PNSLRGKVVR (64 aa)).

It belongs to the methylthiotransferase family. MiaB subfamily. Monomer. It depends on [4Fe-4S] cluster as a cofactor.

It localises to the cytoplasm. It catalyses the reaction N(6)-dimethylallyladenosine(37) in tRNA + (sulfur carrier)-SH + AH2 + 2 S-adenosyl-L-methionine = 2-methylsulfanyl-N(6)-dimethylallyladenosine(37) in tRNA + (sulfur carrier)-H + 5'-deoxyadenosine + L-methionine + A + S-adenosyl-L-homocysteine + 2 H(+). The catalysed reaction is N(6)-dimethylallyladenosine(37) in tRNA + (sulfur carrier)-SH + AH2 + S-adenosyl-L-methionine = 2-thio-N(6)-dimethylallyladenosine(37) in tRNA + (sulfur carrier)-H + 5'-deoxyadenosine + L-methionine + A + H(+). It carries out the reaction 2-thio-N(6)-dimethylallyladenosine(37) in tRNA + S-adenosyl-L-methionine = 2-methylsulfanyl-N(6)-dimethylallyladenosine(37) in tRNA + S-adenosyl-L-homocysteine + H(+). Its function is as follows. Catalyzes the methylthiolation of N6-(dimethylallyl)adenosine (i(6)A), leading to the formation of 2-methylthio-N6-(dimethylallyl)adenosine (ms(2)i(6)A) at position 37 in tRNAs that read codons beginning with uridine. The sequence is that of tRNA-2-methylthio-N(6)-dimethylallyladenosine synthase from Salmonella typhimurium (strain LT2 / SGSC1412 / ATCC 700720).